A 210-amino-acid chain; its full sequence is MSDPIKTALSLVPMVIEQTNRGERAYDIFSRLLKERIIFINGPVEDGMAMLVCAQLLFLEAENPKKEISLYINSPGGVVTSGMAIYDTMQFIRPPVSTLCMGQAASMGSLLLTAGAKGHRFTLPNARIMVHQPSGGFQGQASDIERHAQDIIKMKQRLNEIYVQHTGQNYDVIERTLDRDHFMTAEEAKQFGLVDDVIQYRAETEKEEKD.

Residue Ser106 is the Nucleophile of the active site. Residue His131 is part of the active site.

The protein belongs to the peptidase S14 family. In terms of assembly, fourteen ClpP subunits assemble into 2 heptameric rings which stack back to back to give a disk-like structure with a central cavity, resembling the structure of eukaryotic proteasomes.

It localises to the cytoplasm. The catalysed reaction is Hydrolysis of proteins to small peptides in the presence of ATP and magnesium. alpha-casein is the usual test substrate. In the absence of ATP, only oligopeptides shorter than five residues are hydrolyzed (such as succinyl-Leu-Tyr-|-NHMec, and Leu-Tyr-Leu-|-Tyr-Trp, in which cleavage of the -Tyr-|-Leu- and -Tyr-|-Trp bonds also occurs).. Cleaves peptides in various proteins in a process that requires ATP hydrolysis. Has a chymotrypsin-like activity. Plays a major role in the degradation of misfolded proteins. The chain is ATP-dependent Clp protease proteolytic subunit from Bartonella henselae (strain ATCC 49882 / DSM 28221 / CCUG 30454 / Houston 1) (Rochalimaea henselae).